The following is a 109-amino-acid chain: Large ribosomal subunit protein uL22 (109 aa).

Belongs to the universal ribosomal protein uL22 family. As to quaternary structure, part of the 50S ribosomal subunit.

Its function is as follows. This protein binds specifically to 23S rRNA; its binding is stimulated by other ribosomal proteins, e.g. L4, L17, and L20. It is important during the early stages of 50S assembly. It makes multiple contacts with different domains of the 23S rRNA in the assembled 50S subunit and ribosome. Functionally, the globular domain of the protein is located near the polypeptide exit tunnel on the outside of the subunit, while an extended beta-hairpin is found that lines the wall of the exit tunnel in the center of the 70S ribosome. This chain is Large ribosomal subunit protein uL22, found in Methylibium petroleiphilum (strain ATCC BAA-1232 / LMG 22953 / PM1).